A 236-amino-acid polypeptide reads, in one-letter code: Histone H1 (236 aa).

Over residues 1–10 the composition is skewed to basic and acidic residues; it reads MPPKKTETKA. 2 disordered regions span residues 1 to 36 and 94 to 236; these read MPPK…SPST and KGVF…AEKA. The span at 11–36 shows a compositional bias: low complexity; sequence ADASAAAAPAPAAAPTSAPKTKSPST. Residues 36–111 form the H15 domain; that stretch reads THASYLDMIT…GPSGGTKLAK (76 aa). The segment covering 109 to 122 has biased composition (basic residues); it reads LAKKVAKPAPKKAA. Basic and acidic residues predominate over residues 123–150; that stretch reads PKKETKEKKPAAAKKEGAAKKETKEKKA. A compositionally biased stretch (low complexity) spans 153-162; sequence AKKAAAPKKA. Residues 165–174 are compositionally biased toward basic and acidic residues; that stretch reads PKKEVKEKKA. Residues 202–220 show a composition bias toward low complexity; sequence AKSTAKPAAAKKAAAPKKA. Basic and acidic residues predominate over residues 224-236; that stretch reads KKAEKAEPAAEKA.

It belongs to the histone H1/H5 family.

It is found in the nucleus. Its subcellular location is the chromosome. In terms of biological role, could act as an H1-type linker histone. The sequence is that of Histone H1 (hH1) from Neurospora crassa (strain ATCC 24698 / 74-OR23-1A / CBS 708.71 / DSM 1257 / FGSC 987).